A 432-amino-acid polypeptide reads, in one-letter code: uncharacterized protein (432 aa).

Lys243 is subject to N6-(pyridoxal phosphate)lysine.

This sequence belongs to the class-II pyridoxal-phosphate-dependent aminotransferase family. The cofactor is pyridoxal 5'-phosphate.

The protein localises to the cytoplasm. This is an uncharacterized protein from Methanocaldococcus jannaschii (strain ATCC 43067 / DSM 2661 / JAL-1 / JCM 10045 / NBRC 100440) (Methanococcus jannaschii).